Consider the following 131-residue polypeptide: D-ribose pyranase (131 aa).

His-20 serves as the catalytic Proton donor. Substrate contacts are provided by residues Asp-28, His-98, and 120 to 122; that span reads YAN.

It belongs to the RbsD / FucU family. RbsD subfamily. In terms of assembly, homodecamer.

Its subcellular location is the cytoplasm. The enzyme catalyses beta-D-ribopyranose = beta-D-ribofuranose. Its pathway is carbohydrate metabolism; D-ribose degradation; D-ribose 5-phosphate from beta-D-ribopyranose: step 1/2. Catalyzes the interconversion of beta-pyran and beta-furan forms of D-ribose. The sequence is that of D-ribose pyranase from Clostridium perfringens (strain ATCC 13124 / DSM 756 / JCM 1290 / NCIMB 6125 / NCTC 8237 / Type A).